The primary structure comprises 360 residues: MLVWLAEYLVKYHTFFNVFSYLTFRAIVGLLTALIIALWMGPHLIAWLQKMQIGQVVRNEGPESHFSKRGTPTMGGIMILFSIAVSTLLWARLDNPYVWCVLLVLIGYGIIGFIDDYRKVVRKDTRGLIARWKYFWQSVLALAVAFSMYAIGKDTPATQLVVPFFKDVMPQLGMLYILLAYFVIVGTSNAVNLTDGLDGLAIMPTVFVAAGFALVAWATGNVNFASYLKIPYLMHAGELVIVCTAIVGAGLGFLWFNTYPAQVFMGDVGSLALGGALGTIAVLLRQEFLLVIMGGVFVVETLSVILQVGSFKLRGQRIFRMAPIHHHYELKGWPEPRVIVRFWIISLMLVLIGLATLKVR.

A run of 10 helical transmembrane segments spans residues 27-47 (IVGLLTALIIALWMGPHLIAW), 71-91 (TPTMGGIMILFSIAVSTLLWA), 97-117 (YVWCVLLVLIGYGIIGFIDDY), 132-152 (WKYFWQSVLALAVAFSMYAIG), 168-188 (VMPQLGMLYILLAYFVIVGTS), 199-219 (GLAIMPTVFVAAGFALVAWAT), 236-256 (AGELVIVCTAIVGAGLGFLWF), 263-283 (VFMGDVGSLALGGALGTIAVL), 288-308 (FLLVIMGGVFVVETLSVILQV), and 338-358 (VIVRFWIISLMLVLIGLATLK).

The protein belongs to the glycosyltransferase 4 family. MraY subfamily. It depends on Mg(2+) as a cofactor.

It localises to the cell inner membrane. The catalysed reaction is UDP-N-acetyl-alpha-D-muramoyl-L-alanyl-gamma-D-glutamyl-meso-2,6-diaminopimeloyl-D-alanyl-D-alanine + di-trans,octa-cis-undecaprenyl phosphate = di-trans,octa-cis-undecaprenyl diphospho-N-acetyl-alpha-D-muramoyl-L-alanyl-D-glutamyl-meso-2,6-diaminopimeloyl-D-alanyl-D-alanine + UMP. It functions in the pathway cell wall biogenesis; peptidoglycan biosynthesis. Its function is as follows. Catalyzes the initial step of the lipid cycle reactions in the biosynthesis of the cell wall peptidoglycan: transfers peptidoglycan precursor phospho-MurNAc-pentapeptide from UDP-MurNAc-pentapeptide onto the lipid carrier undecaprenyl phosphate, yielding undecaprenyl-pyrophosphoryl-MurNAc-pentapeptide, known as lipid I. The protein is Phospho-N-acetylmuramoyl-pentapeptide-transferase of Proteus mirabilis (strain HI4320).